A 31-amino-acid chain; its full sequence is U14-ctenitoxin-Co1c (31 aa).

Expressed by the venom gland.

The protein localises to the secreted. Not toxic to mice by intracerebroventricular injection. In Ctenus ornatus (Brazilian spider), this protein is U14-ctenitoxin-Co1c.